Consider the following 551-residue polypeptide: Glucans biosynthesis protein D (551 aa).

A signal peptide (tat-type signal) is located at residues 1-32 (MDRRRFIKGSMAMAAVCGTSGIASLFSQAAFA).

The protein belongs to the OpgD/OpgG family. Post-translationally, predicted to be exported by the Tat system. The position of the signal peptide cleavage has not been experimentally proven.

The protein localises to the periplasm. It participates in glycan metabolism; osmoregulated periplasmic glucan (OPG) biosynthesis. Probably involved in the control of the structural glucose backbone of osmoregulated periplasmic glucans (OPGs). The polypeptide is Glucans biosynthesis protein D (Escherichia coli (strain K12 / MC4100 / BW2952)).